Here is a 1173-residue protein sequence, read N- to C-terminus: WASH complex subunit 4 (1173 aa).

N-acetylalanine is present on alanine 2. Serine 7 bears the Phosphoserine mark. Residues 705-1173 (KDLALFFSLN…STVSADPVVK (469 aa)) form a sufficient for interaction with WASHC5 region. Residues 1135-1161 (RADKTAAEENQEKKEKEEETKTSNGDL) are a coiled coil. Positions 1142–1155 (EENQEKKEKEEETK) are enriched in basic and acidic residues. A disordered region spans residues 1142–1173 (EENQEKKEKEEETKTSNGDLSDSTVSADPVVK). Threonine 1154 carries the post-translational modification Phosphothreonine. Polar residues predominate over residues 1157-1167 (SNGDLSDSTVS).

This sequence belongs to the SWIP family. As to quaternary structure, component of the WASH core complex also described as WASH regulatory complex (SHRC) composed of WASH (WASHC1, WASH2P or WASH3P), WASHC2 (WASHC2A or WASHC2C), WASHC3, WASHC4 and WASHC5. The WASH core complex associates via WASHC2 with the F-actin-capping protein dimer (formed by CAPZA1, CAPZA2 or CAPZA3 and CAPZB) in a transient or substoichiometric manner which was initially described as WASH complex.

It localises to the early endosome. In terms of biological role, acts as a component of the WASH core complex that functions as a nucleation-promoting factor (NPF) at the surface of endosomes, where it recruits and activates the Arp2/3 complex to induce actin polymerization, playing a key role in the fission of tubules that serve as transport intermediates during endosome sorting. The sequence is that of WASH complex subunit 4 from Homo sapiens (Human).